The following is a 554-amino-acid chain: CTP synthase (554 aa).

Residues 1-265 form an amidoligase domain region; it reads MTPLIFVTGG…DEIVIDQFKL (265 aa). Serine 13 provides a ligand contact to CTP. Serine 13 is a binding site for UTP. ATP is bound by residues 14–19 and aspartate 71; that span reads SLGKGI. Positions 71 and 139 each coordinate Mg(2+). Residues 146–148, 186–191, and lysine 222 contribute to the CTP site; these read DIE and KTKPTQ. UTP contacts are provided by residues 186-191 and lysine 222; that span reads KTKPTQ. The 254-residue stretch at 292 to 545 folds into the Glutamine amidotransferase type-1 domain; that stretch reads TIAVVGKYVD…VKASRARKAG (254 aa). Residue glycine 353 coordinates L-glutamine. Catalysis depends on cysteine 380, which acts as the Nucleophile; for glutamine hydrolysis. L-glutamine is bound by residues 381-384, glutamate 404, and arginine 471; that span reads YGMQ. Residues histidine 518 and glutamate 520 contribute to the active site.

The protein belongs to the CTP synthase family. In terms of assembly, homotetramer.

It carries out the reaction UTP + L-glutamine + ATP + H2O = CTP + L-glutamate + ADP + phosphate + 2 H(+). The enzyme catalyses L-glutamine + H2O = L-glutamate + NH4(+). It catalyses the reaction UTP + NH4(+) + ATP = CTP + ADP + phosphate + 2 H(+). It participates in pyrimidine metabolism; CTP biosynthesis via de novo pathway; CTP from UDP: step 2/2. Its activity is regulated as follows. Allosterically activated by GTP, when glutamine is the substrate; GTP has no effect on the reaction when ammonia is the substrate. The allosteric effector GTP functions by stabilizing the protein conformation that binds the tetrahedral intermediate(s) formed during glutamine hydrolysis. Inhibited by the product CTP, via allosteric rather than competitive inhibition. In terms of biological role, catalyzes the ATP-dependent amination of UTP to CTP with either L-glutamine or ammonia as the source of nitrogen. Regulates intracellular CTP levels through interactions with the four ribonucleotide triphosphates. This chain is CTP synthase, found in Xylella fastidiosa (strain M23).